A 265-amino-acid polypeptide reads, in one-letter code: Undecaprenyl-diphosphatase (265 aa).

The next 7 helical transmembrane spans lie at 42 to 62, 82 to 102, 108 to 128, 157 to 177, 181 to 201, 217 to 237, and 244 to 264; these read AATF…VLYW, GIVL…LLHA, LFRP…MILV, LALW…MLLG, PLAA…ATGY, FFLV…KVFV, and TLIP…YFMV.

It belongs to the UppP family.

It localises to the cell inner membrane. The catalysed reaction is di-trans,octa-cis-undecaprenyl diphosphate + H2O = di-trans,octa-cis-undecaprenyl phosphate + phosphate + H(+). Catalyzes the dephosphorylation of undecaprenyl diphosphate (UPP). Confers resistance to bacitracin. The chain is Undecaprenyl-diphosphatase from Desulfovibrio desulfuricans (strain ATCC 27774 / DSM 6949 / MB).